We begin with the raw amino-acid sequence, 157 residues long: Crossover junction endodeoxyribonuclease RuvC (157 aa).

Residues Asp-7, Glu-67, and Asp-139 contribute to the active site. Residues Asp-7, Glu-67, and Asp-139 each contribute to the Mg(2+) site.

It belongs to the RuvC family. As to quaternary structure, homodimer which binds Holliday junction (HJ) DNA. The HJ becomes 2-fold symmetrical on binding to RuvC with unstacked arms; it has a different conformation from HJ DNA in complex with RuvA. In the full resolvosome a probable DNA-RuvA(4)-RuvB(12)-RuvC(2) complex forms which resolves the HJ. The cofactor is Mg(2+).

The protein resides in the cytoplasm. The enzyme catalyses Endonucleolytic cleavage at a junction such as a reciprocal single-stranded crossover between two homologous DNA duplexes (Holliday junction).. The RuvA-RuvB-RuvC complex processes Holliday junction (HJ) DNA during genetic recombination and DNA repair. Endonuclease that resolves HJ intermediates. Cleaves cruciform DNA by making single-stranded nicks across the HJ at symmetrical positions within the homologous arms, yielding a 5'-phosphate and a 3'-hydroxyl group; requires a central core of homology in the junction. The consensus cleavage sequence is 5'-(A/T)TT(C/G)-3'. Cleavage occurs on the 3'-side of the TT dinucleotide at the point of strand exchange. HJ branch migration catalyzed by RuvA-RuvB allows RuvC to scan DNA until it finds its consensus sequence, where it cleaves and resolves the cruciform DNA. The protein is Crossover junction endodeoxyribonuclease RuvC of Prochlorococcus marinus subsp. pastoris (strain CCMP1986 / NIES-2087 / MED4).